The chain runs to 114 residues: Phosphorelay protein LuxU (114 aa).

Residues 19 to 114 (GSDNVPVLLD…TRDAYRSWTN (96 aa)) enclose the HPt domain. Phosphohistidine is present on His58.

As to quaternary structure, monomer.

Functionally, phosphorelay protein which receives sensory signals from LuxN and LuxP and transmits them to LuxO, at low cell density. LuxN and LuxP transfer a phosphoryl group to LuxU on His-58 and this phosphoryl group is further transferred to LuxO. At high cell density, as LuxU could function to establish an equilibrium between the aspartyl-phosphate of LuxN and the aspartyl-phosphate of LuxO, LuxU transfers phosphate from LuxO to LuxN (and probably LuxP) and finally phosphate is drained from the system. The sequence is that of Phosphorelay protein LuxU (luxU) from Vibrio harveyi (Beneckea harveyi).